Reading from the N-terminus, the 415-residue chain is Glutamyl-tRNA reductase (415 aa).

Substrate is bound by residues 49–52, S106, 111–113, and Q117; these read TCNR and EPQ. Catalysis depends on C50, which acts as the Nucleophile. 186–191 contacts NADP(+); the sequence is GAGETI.

Belongs to the glutamyl-tRNA reductase family. In terms of assembly, homodimer.

The enzyme catalyses (S)-4-amino-5-oxopentanoate + tRNA(Glu) + NADP(+) = L-glutamyl-tRNA(Glu) + NADPH + H(+). Its pathway is porphyrin-containing compound metabolism; protoporphyrin-IX biosynthesis; 5-aminolevulinate from L-glutamyl-tRNA(Glu): step 1/2. Catalyzes the NADPH-dependent reduction of glutamyl-tRNA(Glu) to glutamate 1-semialdehyde (GSA). The chain is Glutamyl-tRNA reductase from Teredinibacter turnerae (strain ATCC 39867 / T7901).